Consider the following 115-residue polypeptide: Large ribosomal subunit protein bL19 (115 aa).

It belongs to the bacterial ribosomal protein bL19 family.

In terms of biological role, this protein is located at the 30S-50S ribosomal subunit interface and may play a role in the structure and function of the aminoacyl-tRNA binding site. The polypeptide is Large ribosomal subunit protein bL19 (Baumannia cicadellinicola subsp. Homalodisca coagulata).